The sequence spans 73 residues: Putative membrane protein insertion efficiency factor (73 aa).

It belongs to the UPF0161 family.

Its subcellular location is the cell inner membrane. Its function is as follows. Could be involved in insertion of integral membrane proteins into the membrane. This chain is Putative membrane protein insertion efficiency factor, found in Neisseria meningitidis serogroup C (strain 053442).